A 178-amino-acid chain; its full sequence is Fatty-acid and retinol-binding protein 1 (178 aa).

The first 16 residues, 1–16 (MYHQLILMALIGVIMA), serve as a signal peptide directing secretion. N-linked (GlcNAc...) asparagine glycans are attached at residues N44 and N75. Coiled-coil stretches lie at residues 67-89 (DAAL…ELRN) and 122-154 (QKLD…LKAT). N157 carries an N-linked (GlcNAc...) asparagine glycan.

Belongs to the fatty-acid and retinol-binding protein (FARBP) family. In terms of processing, N-glycosylated.

It localises to the secreted. Its function is as follows. Binds retinol and different fatty acids. The sequence is that of Fatty-acid and retinol-binding protein 1 from Onchocerca ochengi (Filarial nematode worm).